Here is a 46-residue protein sequence, read N- to C-terminus: Protein PsbN (46 aa).

Residues 10-30 (LIITILAVTIAFTAVSLYTAF) form a helical membrane-spanning segment.

This sequence belongs to the PsbN family.

It localises to the cellular thylakoid membrane. Its function is as follows. May play a role in photosystem I and II biogenesis. This Acaryochloris marina (strain MBIC 11017) protein is Protein PsbN.